A 293-amino-acid polypeptide reads, in one-letter code: Fructose-bisphosphate aldolase (293 aa).

D-glyceraldehyde 3-phosphate is bound at residue serine 50. The Proton donor role is filled by aspartate 85. Zn(2+)-binding residues include histidine 86, aspartate 106, glutamate 136, and histidine 178. Glycine 179 is a binding site for dihydroxyacetone phosphate. Residue histidine 208 coordinates Zn(2+). Dihydroxyacetone phosphate is bound by residues 209–211 (GGS) and 230–233 (NVNT).

This sequence belongs to the class II fructose-bisphosphate aldolase family. Zn(2+) serves as cofactor.

The catalysed reaction is beta-D-fructose 1,6-bisphosphate = D-glyceraldehyde 3-phosphate + dihydroxyacetone phosphate. The protein operates within carbohydrate degradation; glycolysis; D-glyceraldehyde 3-phosphate and glycerone phosphate from D-glucose: step 4/4. Functionally, catalyzes the aldol condensation of dihydroxyacetone phosphate (DHAP or glycerone-phosphate) with glyceraldehyde 3-phosphate (G3P) to form fructose 1,6-bisphosphate (FBP) in gluconeogenesis and the reverse reaction in glycolysis. In Streptococcus pyogenes serotype M1, this protein is Fructose-bisphosphate aldolase (fba).